Consider the following 281-residue polypeptide: Auxin-responsive protein IAA19 (281 aa).

Positions 40 to 44 (LRLGL) match the EAR-like (transcriptional repression) motif. Residues 66–126 (LGPAPPPRGG…AAGAPRAAKA (61 aa)) form a disordered region. Over residues 79-91 (GFVDSLDRSEGRR) the composition is skewed to basic and acidic residues. Residues 114–126 (GEAAAGAPRAAKA) are compositionally biased toward low complexity. Positions 161 to 265 (CCYVKVSMDG…RKLRIMRGSD (105 aa)) constitute a PB1 domain.

This sequence belongs to the Aux/IAA family. In terms of assembly, homodimers and heterodimers. As to expression, expressed in etiolated seedlings and flowers.

The protein localises to the nucleus. Functionally, aux/IAA proteins are short-lived transcriptional factors that function as repressors of early auxin response genes at low auxin concentrations. The chain is Auxin-responsive protein IAA19 (IAA19) from Oryza sativa subsp. japonica (Rice).